A 320-amino-acid polypeptide reads, in one-letter code: Acetyl-coenzyme A carboxylase carboxyl transferase subunit alpha (320 aa).

The CoA carboxyltransferase C-terminal domain maps to 42–295 (IEEKAVQALN…GDAIAAAFAE (254 aa)).

The protein belongs to the AccA family. In terms of assembly, acetyl-CoA carboxylase is a heterohexamer composed of biotin carboxyl carrier protein (AccB), biotin carboxylase (AccC) and two subunits each of ACCase subunit alpha (AccA) and ACCase subunit beta (AccD).

It is found in the cytoplasm. The catalysed reaction is N(6)-carboxybiotinyl-L-lysyl-[protein] + acetyl-CoA = N(6)-biotinyl-L-lysyl-[protein] + malonyl-CoA. It participates in lipid metabolism; malonyl-CoA biosynthesis; malonyl-CoA from acetyl-CoA: step 1/1. Functionally, component of the acetyl coenzyme A carboxylase (ACC) complex. First, biotin carboxylase catalyzes the carboxylation of biotin on its carrier protein (BCCP) and then the CO(2) group is transferred by the carboxyltransferase to acetyl-CoA to form malonyl-CoA. The polypeptide is Acetyl-coenzyme A carboxylase carboxyl transferase subunit alpha (Rhodopseudomonas palustris (strain HaA2)).